The chain runs to 165 residues: Small ribosomal subunit protein uS17c (165 aa).

The N-terminal 57 residues, 1 to 57 (MSLSFSLLKPPLSSSNPNPFLHGTTTKLSLLPSFSALSLSSSPPSSSTTYTFPVIKA), are a transit peptide targeting the chloroplast. The disordered stretch occupies residues 128 to 165 (AVAPEGRQSSATRPKPIQAASDELGIPLESQVEGDKTV).

As to quaternary structure, component of the chloroplast small ribosomal subunit (SSU). Mature 70S chloroplast ribosomes of higher plants consist of a small (30S) and a large (50S) subunit. The 30S small subunit contains 1 molecule of ribosomal RNA (16S rRNA) and 24 different proteins. The 50S large subunit contains 3 rRNA molecules (23S, 5S and 4.5S rRNA) and 33 different proteins.

Its subcellular location is the plastid. It localises to the chloroplast. Component of the chloroplast ribosome (chloro-ribosome), a dedicated translation machinery responsible for the synthesis of chloroplast genome-encoded proteins, including proteins of the transcription and translation machinery and components of the photosynthetic apparatus. The protein is Small ribosomal subunit protein uS17c (RPS17) of Spinacia oleracea (Spinach).